Consider the following 94-residue polypeptide: MAGTVAHPEGITNPPIDELLEATDSKYSLVIYAAKRARQINAYYSQLGEGLLEYVGPLVETTNAQEKPLSIALREINAGLLTHETVSDSLPPVA.

Belongs to the RNA polymerase subunit omega family. As to quaternary structure, the RNAP catalytic core consists of 2 alpha, 1 beta, 1 beta' and 1 omega subunit. When a sigma factor is associated with the core the holoenzyme is formed, which can initiate transcription.

It carries out the reaction RNA(n) + a ribonucleoside 5'-triphosphate = RNA(n+1) + diphosphate. Promotes RNA polymerase assembly. Latches the N- and C-terminal regions of the beta' subunit thereby facilitating its interaction with the beta and alpha subunits. The polypeptide is DNA-directed RNA polymerase subunit omega (Frankia alni (strain DSM 45986 / CECT 9034 / ACN14a)).